The sequence spans 338 residues: 1-aminocyclopropane-1-carboxylate deaminase (338 aa).

N6-(pyridoxal phosphate)lysine is present on K51. The active-site Nucleophile is the S78.

The protein belongs to the ACC deaminase/D-cysteine desulfhydrase family. In terms of assembly, homotrimer. Pyridoxal 5'-phosphate is required as a cofactor.

The enzyme catalyses 1-aminocyclopropane-1-carboxylate + H2O = 2-oxobutanoate + NH4(+). Functionally, catalyzes a cyclopropane ring-opening reaction, the irreversible conversion of 1-aminocyclopropane-1-carboxylate (ACC) to ammonia and alpha-ketobutyrate. Allows growth on ACC as a nitrogen source. This is 1-aminocyclopropane-1-carboxylate deaminase from Ralstonia nicotianae (strain ATCC BAA-1114 / GMI1000) (Ralstonia solanacearum).